We begin with the raw amino-acid sequence, 469 residues long: MSFLTVSRLAPKLLNSKNATYFLVAARNASASSTNLKDVLADLIPKEQTRIKNFKQQYGKTNIGQITVDMVYGGMRGMKGLVYETSVLDPEEGIRFRGYSIPECQKLLPKAPGGEEPLPEGLFWLLVTGQVPTEEQVNWVSKEWAKRAALPSHVVTMLDNFPTNLHPMSQFSAAITALNSESSFARAYSEGVHKSKYWEFIYEDSMDLIAKLPCIAAKIYRNLYREGSSIGAIDSNLDWSHNFTNMLGYSEPQFTELMRLYLTIHSDHEGGNVSAHTSHLVGSALSDPYLSFSAAMNGLAGPLHGLANQEVLVWLTALQKELGGEVSDERMRDYIWNTLKSGRVVPGYGHAVLRKTDPRYTCQREFALKHLPNDPMFKLVAQLYKIVPNVLLEQGRAKNPWPNVDAHSGVLLQYYGMTEMNYYTVLFGVSRALGVLAQLVWSRALGFPLERPKSMSSDGLMTLVGAKSG.

The N-terminal 30 residues, 1–30 (MSFLTVSRLAPKLLNSKNATYFLVAARNAS), are a transit peptide targeting the mitochondrion. Residues His304 and His350 contribute to the active site. Oxaloacetate is bound at residue Arg359. Residue Asp405 is part of the active site. Oxaloacetate-binding residues include Arg431 and Arg451.

This sequence belongs to the citrate synthase family. In terms of assembly, homodimer.

Its subcellular location is the mitochondrion matrix. The enzyme catalyses oxaloacetate + acetyl-CoA + H2O = citrate + CoA + H(+). It functions in the pathway carbohydrate metabolism; tricarboxylic acid cycle; isocitrate from oxaloacetate: step 1/2. Key enzyme of the Krebs tricarboxylic acid cycle which catalyzes the synthesis of citrate from acetyl coenzyme A and oxaloacetate. The protein is Citrate synthase, mitochondrial (cs) of Kajikia audax (Striped marlin).